The primary structure comprises 90 residues: Progonadoliberin-3 (90 aa).

The first 23 residues, 1–23 (MEASSRVTVQVLLLALVVQVTLS), serve as a signal peptide directing secretion. Glutamine 24 is modified (pyrrolidone carboxylic acid). At glycine 33 the chain carries Glycine amide.

The protein belongs to the GnRH family.

The protein resides in the secreted. Its function is as follows. Stimulates the secretion of gonadotropins. The polypeptide is Progonadoliberin-3 (gnrh3) (Pagrus major (Red sea bream)).